The sequence spans 797 residues: uncharacterized protein (797 aa).

This is an uncharacterized protein from Treponema pallidum (strain Nichols).